The primary structure comprises 240 residues: Small ribosomal subunit protein uS3 (240 aa).

Residues 39–109 (IRQYIEKTLN…QIRVNVIEVP (71 aa)) enclose the KH type-2 domain. A disordered region spans residues 219 to 240 (APPSQPRRKSRRQQFDDRSQDG). Basic and acidic residues predominate over residues 231–240 (QQFDDRSQDG).

Belongs to the universal ribosomal protein uS3 family. Part of the 30S ribosomal subunit. Forms a tight complex with proteins S10 and S14.

In terms of biological role, binds the lower part of the 30S subunit head. Binds mRNA in the 70S ribosome, positioning it for translation. The chain is Small ribosomal subunit protein uS3 from Synechocystis sp. (strain ATCC 27184 / PCC 6803 / Kazusa).